The primary structure comprises 91 residues: Cell division topological specificity factor (91 aa).

Belongs to the MinE family.

Functionally, prevents the cell division inhibition by proteins MinC and MinD at internal division sites while permitting inhibition at polar sites. This ensures cell division at the proper site by restricting the formation of a division septum at the midpoint of the long axis of the cell. This is Cell division topological specificity factor from Gloeobacter violaceus (strain ATCC 29082 / PCC 7421).